A 703-amino-acid chain; its full sequence is Leucine zipper putative tumor suppressor 3 (703 aa).

3 disordered regions span residues 1–22 (MAPADLASEGPKLEDPPAPHLF), 40–190 (RADP…SEPL), and 204–347 (FHSM…PPSP). The segment covering 96-107 (GSFPGPRSSGSG) has biased composition (low complexity). A compositionally biased stretch (basic and acidic residues) spans 109-124 (NRERPGPGRYPSEDKV). Residues 205 to 218 (HSMQNLCPPQTNGT) are compositionally biased toward polar residues. Over residues 251-268 (DSGRNSLTSLPTYSSSYS) the composition is skewed to low complexity. Residues 290-299 (SSGGGGGGSG) are compositionally biased toward gly residues. Residues 304–324 (GTSDSGRASSKSGSSSSMGRS) are compositionally biased toward low complexity. Gly residues predominate over residues 325–336 (GHLGSGEGGNGG). 2 positions are modified to phosphoserine: S346 and S348. Coiled coils occupy residues 348–526 (SALI…SLRD) and 600–669 (TRAL…RLRE). The segment at 665 to 703 (RRLRERGAAGGSRTPTPQHGEEEKAWTPSRLERIESTEI) is disordered. Over residues 683-703 (HGEEEKAWTPSRLERIESTEI) the composition is skewed to basic and acidic residues.

The protein belongs to the LZTS3 family. Interacts (via C-terminus) with SHANK3 (via PDZ domain). Interacts (via coiled coil) with SIPA1L1. Can form homooligomers. Detected in brain, with highest expression in brain cortex, caudate putamen, cerebellum and hippocampus. Detected in neuropil (at protein level). Detected in brain and kidney.

The protein resides in the synapse. Its subcellular location is the postsynaptic density. It is found in the cell projection. It localises to the dendritic spine. The protein localises to the dendrite. The protein resides in the cytoplasm. Its subcellular location is the cytoskeleton. May be involved in promoting the maturation of dendritic spines, probably via regulating SIPA1L1 levels at the postsynaptic density of synapses. The protein is Leucine zipper putative tumor suppressor 3 of Rattus norvegicus (Rat).